A 612-amino-acid chain; its full sequence is Dihydroxy-acid dehydratase (612 aa).

Residue aspartate 81 participates in Mg(2+) binding. [2Fe-2S] cluster is bound at residue cysteine 122. The Mg(2+) site is built by aspartate 123 and lysine 124. Position 124 is an N6-carboxylysine (lysine 124). Cysteine 195 provides a ligand contact to [2Fe-2S] cluster. Glutamate 491 lines the Mg(2+) pocket. Residue serine 517 is the Proton acceptor of the active site.

This sequence belongs to the IlvD/Edd family. In terms of assembly, homodimer. It depends on [2Fe-2S] cluster as a cofactor. Requires Mg(2+) as cofactor.

It carries out the reaction (2R)-2,3-dihydroxy-3-methylbutanoate = 3-methyl-2-oxobutanoate + H2O. It catalyses the reaction (2R,3R)-2,3-dihydroxy-3-methylpentanoate = (S)-3-methyl-2-oxopentanoate + H2O. It participates in amino-acid biosynthesis; L-isoleucine biosynthesis; L-isoleucine from 2-oxobutanoate: step 3/4. It functions in the pathway amino-acid biosynthesis; L-valine biosynthesis; L-valine from pyruvate: step 3/4. In terms of biological role, functions in the biosynthesis of branched-chain amino acids. Catalyzes the dehydration of (2R,3R)-2,3-dihydroxy-3-methylpentanoate (2,3-dihydroxy-3-methylvalerate) into 2-oxo-3-methylpentanoate (2-oxo-3-methylvalerate) and of (2R)-2,3-dihydroxy-3-methylbutanoate (2,3-dihydroxyisovalerate) into 2-oxo-3-methylbutanoate (2-oxoisovalerate), the penultimate precursor to L-isoleucine and L-valine, respectively. In Haemophilus influenzae (strain PittEE), this protein is Dihydroxy-acid dehydratase.